The following is a 55-amino-acid chain: MASSTDVRPKITLACEVCKHRNYITKKNRRNDPDRLELKKFCPNCGVHRAHKESR.

The protein belongs to the bacterial ribosomal protein bL33 family.

In Mycobacterium sp. (strain JLS), this protein is Large ribosomal subunit protein bL33A.